Here is a 190-residue protein sequence, read N- to C-terminus: RNA pyrophosphohydrolase (190 aa).

Residues 6 to 149 (GYRPNVGIIL…KRDVYTQALN (144 aa)) form the Nudix hydrolase domain. The short motif at 38-59 (GGIKYGESPVQAMYRELHEEVG) is the Nudix box element. A disordered region spans residues 167-190 (QRVHGPRSTDNPSSETDGHAHIAG).

Belongs to the Nudix hydrolase family. RppH subfamily. A divalent metal cation serves as cofactor.

In terms of biological role, accelerates the degradation of transcripts by removing pyrophosphate from the 5'-end of triphosphorylated RNA, leading to a more labile monophosphorylated state that can stimulate subsequent ribonuclease cleavage. This is RNA pyrophosphohydrolase from Bordetella parapertussis (strain 12822 / ATCC BAA-587 / NCTC 13253).